Reading from the N-terminus, the 192-residue chain is Mitochondrial import inner membrane translocase subunit Tim22 (192 aa).

2 disulfides stabilise this stretch: Cys67/Cys139 and Cys158/Cys177. The next 3 helical transmembrane spans lie at 72-92 (VLACVGGFVLGGAFGVFTAGI), 123-141 (YAKNFAIVGAMFSCTECLV), and 168-188 (AGVKAGAIGCGGFAAFSAAID).

The protein belongs to the Tim17/Tim22/Tim23 family. In terms of assembly, component of the TIM22 complex, whose core is composed of TIMM22, associated with peripheral protein FXC1/TIMM10B and the 70 kDa heterohexamer. In most cases, the 70 kDa complex is composed of TIMM9 and TIMM10 (TIMM10A or TIMM10B). A small fraction of the 70 kDa complex is composed of TIMM8 (TIMM8A/DDP1 or TIMM8B/DDP2) and TIMM13. The TIM22 complex also contains AGK and TIMM29. Interacts directly with TIMM9, TIMM10A and FXC1/TIMM10B. Interacts (when oxidized) with TIMM29; interaction is direct. In terms of processing, disulfide bonds promote efficient assembly of the TIM22 complex.

It localises to the mitochondrion inner membrane. In terms of biological role, essential core component of the TIM22 complex, a complex that mediates the import and insertion of multi-pass transmembrane proteins into the mitochondrial inner membrane. In the TIM22 complex, it constitutes the voltage-activated and signal-gated channel. Forms a twin-pore translocase that uses the membrane potential as external driving force in 2 voltage-dependent steps. This Rattus norvegicus (Rat) protein is Mitochondrial import inner membrane translocase subunit Tim22 (Timm22).